The following is a 394-amino-acid chain: 2-oxoglutarate and iron-dependent oxygenase domain-containing protein CP2 (394 aa).

Residues 1-35 (MSSEQREGSQETTTTTVEGNGTIAGQNSHSAAPTT) are disordered. The segment covering 17–35 (VEGNGTIAGQNSHSAAPTT) has biased composition (polar residues). Residues 248–347 (DSHHGFVVEY…RVNMLLWCRS (100 aa)) form the Fe2OG dioxygenase domain. 3 residues coordinate Fe cation: histidine 268, aspartate 270, and histidine 328. 2-oxoglutarate is bound at residue arginine 338.

Requires Fe(2+) as cofactor. The cofactor is L-ascorbate. In terms of tissue distribution, expressed in roots, cotyledons, rosette leaves, cauline leaves, inflorescences and siliques.

Its subcellular location is the nucleus. The protein localises to the nucleoplasm. In terms of biological role, participates in the epigenetic repression of flowering genes in association with ICU11. Functions in the repression of several members of the MADS-box transcription factors family, including SEP3, during vegetative development via histone modification. The polypeptide is 2-oxoglutarate and iron-dependent oxygenase domain-containing protein CP2 (Arabidopsis thaliana (Mouse-ear cress)).